Here is a 295-residue protein sequence, read N- to C-terminus: Ethanolamine ammonia-lyase small subunit (295 aa).

3 residues coordinate adenosylcob(III)alamin: V207, E228, and C258.

This sequence belongs to the EutC family. The basic unit is a heterodimer which dimerizes to form tetramers. The heterotetramers trimerize; 6 large subunits form a core ring with 6 small subunits projecting outwards. Adenosylcob(III)alamin is required as a cofactor.

The protein localises to the bacterial microcompartment. It catalyses the reaction ethanolamine = acetaldehyde + NH4(+). Its pathway is amine and polyamine degradation; ethanolamine degradation. Functionally, catalyzes the deamination of various vicinal amino-alcohols to oxo compounds. Allows this organism to utilize ethanolamine as the sole source of nitrogen and carbon in the presence of external vitamin B12. The protein is Ethanolamine ammonia-lyase small subunit of Escherichia coli (strain 55989 / EAEC).